The primary structure comprises 91 residues: Early E3B 10.4 kDa protein (91 aa).

Residues 1–22 (MIPRVFILLTLVALFCACSTLA) form the signal peptide. Topologically, residues 23 to 34 (AVSHIEVDCIPA) are lumenal. A helical transmembrane segment spans residues 35–60 (FTVYLLYGFVTLTLICSLITVVIAFI). Residues 61 to 91 (QCIDWVCVRFAYLRHHPQYRDRTIAELLRIL) lie on the Cytoplasmic side of the membrane.

This sequence belongs to the adenoviridae E3B family.

It is found in the host endoplasmic reticulum membrane. Functionally, down-regulates the EGF receptor. The polypeptide is Early E3B 10.4 kDa protein (Homo sapiens (Human)).